We begin with the raw amino-acid sequence, 154 residues long: Universal stress protein Sll1388 (154 aa).

This sequence belongs to the universal stress protein A family.

This is Universal stress protein Sll1388 from Synechocystis sp. (strain ATCC 27184 / PCC 6803 / Kazusa).